The following is a 177-amino-acid chain: Protein GrpE (177 aa).

Residues 1 to 26 (MSEEIKKDDLQEEVEATETEETVEEV) are disordered. Residues 10 to 26 (LQEEVEATETEETVEEV) are compositionally biased toward acidic residues.

The protein belongs to the GrpE family. As to quaternary structure, homodimer.

It is found in the cytoplasm. Functionally, participates actively in the response to hyperosmotic and heat shock by preventing the aggregation of stress-denatured proteins, in association with DnaK and GrpE. It is the nucleotide exchange factor for DnaK and may function as a thermosensor. Unfolded proteins bind initially to DnaJ; upon interaction with the DnaJ-bound protein, DnaK hydrolyzes its bound ATP, resulting in the formation of a stable complex. GrpE releases ADP from DnaK; ATP binding to DnaK triggers the release of the substrate protein, thus completing the reaction cycle. Several rounds of ATP-dependent interactions between DnaJ, DnaK and GrpE are required for fully efficient folding. This Streptococcus agalactiae serotype Ia (strain ATCC 27591 / A909 / CDC SS700) protein is Protein GrpE.